Here is an 856-residue protein sequence, read N- to C-terminus: Leucine--tRNA ligase (856 aa).

The 'HIGH' region signature appears at 42 to 52 (PYPSGKLHMGH). Residues 615–619 (KMSKS) carry the 'KMSKS' region motif. K618 is a binding site for ATP.

It belongs to the class-I aminoacyl-tRNA synthetase family.

The protein localises to the cytoplasm. It carries out the reaction tRNA(Leu) + L-leucine + ATP = L-leucyl-tRNA(Leu) + AMP + diphosphate. The polypeptide is Leucine--tRNA ligase (Chromohalobacter salexigens (strain ATCC BAA-138 / DSM 3043 / CIP 106854 / NCIMB 13768 / 1H11)).